We begin with the raw amino-acid sequence, 159 residues long: Phosphopantetheine adenylyltransferase (159 aa).

Position 8 (S8) interacts with substrate. Residues 8-9 and H16 each bind ATP; that span reads SF. Substrate-binding residues include K40, T72, and R86. ATP contacts are provided by residues 87–89, E97, and 122–128; these read GLR and HSFVSSS.

This sequence belongs to the bacterial CoaD family. Homohexamer. It depends on Mg(2+) as a cofactor.

Its subcellular location is the cytoplasm. The catalysed reaction is (R)-4'-phosphopantetheine + ATP + H(+) = 3'-dephospho-CoA + diphosphate. It functions in the pathway cofactor biosynthesis; coenzyme A biosynthesis; CoA from (R)-pantothenate: step 4/5. Reversibly transfers an adenylyl group from ATP to 4'-phosphopantetheine, yielding dephospho-CoA (dPCoA) and pyrophosphate. This chain is Phosphopantetheine adenylyltransferase, found in Synechococcus sp. (strain JA-3-3Ab) (Cyanobacteria bacterium Yellowstone A-Prime).